The primary structure comprises 291 residues: Beta-lactamase CTX-M-97 (291 aa).

Positions 1 to 28 (MMTQSIGRSMLTVMATLPLLFSSATLHA) are cleaved as a signal peptide. The active-site Acyl-ester intermediate is Ser73. 237–239 (KTG) provides a ligand contact to substrate.

The protein belongs to the class-A beta-lactamase family.

It catalyses the reaction a beta-lactam + H2O = a substituted beta-amino acid. Its function is as follows. Is probably capable of hydrolyzing cephalosporins such as ceftriaxone and ceftazidime, thus conferring resistance to these antibiotics. The chain is Beta-lactamase CTX-M-97 (bla) from Escherichia coli.